We begin with the raw amino-acid sequence, 649 residues long: FAS-associated factor 1 (649 aa).

In terms of domain architecture, UBA spans 1-57; the sequence is MASNMDREMILADFQACTGIENIDEAITLLEQNNWDLVAAINGVIPQENGILQSDFG. The segment at 55–84 is disordered; that stretch reads DFGGETMPGPTFDPASPPAPAPAPSSSAFR. The residue at position 319 (serine 319) is a Phosphoserine. In terms of domain architecture, UBX spans 568–645; it reads NAEPVSKLRI…NLFPQETLFL (78 aa). Residue threonine 579 is modified to Phosphothreonine. Serine 581 is subject to Phosphoserine.

As to quaternary structure, interacts with CDT1 and ATPase VCP/p97. Interacts (via UBA domain) with FAS (via death domain). Interacts (via UBA domain) with NLRP12 (via DAPIN/PYRIN domain). Central nervous system.

Its subcellular location is the nucleus. In terms of biological role, ubiquitin-binding protein. Required for the progression of DNA replication forks by targeting DNA replication licensing factor CDT1 for degradation. Potentiates but cannot initiate FAS-induced apoptosis. The protein is FAS-associated factor 1 (Faf1) of Rattus norvegicus (Rat).